Here is a 187-residue protein sequence, read N- to C-terminus: Peptidyl-tRNA hydrolase (187 aa).

Y14 is a binding site for tRNA. The Proton acceptor role is filled by H19. The tRNA site is built by Y63 and N65.

The protein belongs to the PTH family. In terms of assembly, monomer.

Its subcellular location is the cytoplasm. It carries out the reaction an N-acyl-L-alpha-aminoacyl-tRNA + H2O = an N-acyl-L-amino acid + a tRNA + H(+). In terms of biological role, hydrolyzes ribosome-free peptidyl-tRNAs (with 1 or more amino acids incorporated), which drop off the ribosome during protein synthesis, or as a result of ribosome stalling. Catalyzes the release of premature peptidyl moieties from peptidyl-tRNA molecules trapped in stalled 50S ribosomal subunits, and thus maintains levels of free tRNAs and 50S ribosomes. The sequence is that of Peptidyl-tRNA hydrolase from Thermodesulfovibrio yellowstonii (strain ATCC 51303 / DSM 11347 / YP87).